The primary structure comprises 142 residues: Large ribosomal subunit protein uL13 (142 aa).

It belongs to the universal ribosomal protein uL13 family. Part of the 50S ribosomal subunit.

In terms of biological role, this protein is one of the early assembly proteins of the 50S ribosomal subunit, although it is not seen to bind rRNA by itself. It is important during the early stages of 50S assembly. This is Large ribosomal subunit protein uL13 from Psychromonas ingrahamii (strain DSM 17664 / CCUG 51855 / 37).